Here is a 320-residue protein sequence, read N- to C-terminus: Lipoyl synthase (320 aa).

Residues M1–R29 show a composition bias toward basic and acidic residues. Residues M1–S32 form a disordered region. [4Fe-4S] cluster is bound by residues C60, C65, C71, C86, C90, C93, and S300. In terms of domain architecture, Radical SAM core spans C71–L289.

It belongs to the radical SAM superfamily. Lipoyl synthase family. [4Fe-4S] cluster serves as cofactor.

It localises to the cytoplasm. It catalyses the reaction [[Fe-S] cluster scaffold protein carrying a second [4Fe-4S](2+) cluster] + N(6)-octanoyl-L-lysyl-[protein] + 2 oxidized [2Fe-2S]-[ferredoxin] + 2 S-adenosyl-L-methionine + 4 H(+) = [[Fe-S] cluster scaffold protein] + N(6)-[(R)-dihydrolipoyl]-L-lysyl-[protein] + 4 Fe(3+) + 2 hydrogen sulfide + 2 5'-deoxyadenosine + 2 L-methionine + 2 reduced [2Fe-2S]-[ferredoxin]. The protein operates within protein modification; protein lipoylation via endogenous pathway; protein N(6)-(lipoyl)lysine from octanoyl-[acyl-carrier-protein]: step 2/2. Functionally, catalyzes the radical-mediated insertion of two sulfur atoms into the C-6 and C-8 positions of the octanoyl moiety bound to the lipoyl domains of lipoate-dependent enzymes, thereby converting the octanoylated domains into lipoylated derivatives. This Cereibacter sphaeroides (strain ATCC 17025 / ATH 2.4.3) (Rhodobacter sphaeroides) protein is Lipoyl synthase.